A 152-amino-acid chain; its full sequence is Nucleoside diphosphate kinase (152 aa).

The ATP site is built by K9, F57, R85, T91, R102, and N112. The active-site Pros-phosphohistidine intermediate is H115.

The protein belongs to the NDK family. As to quaternary structure, homotetramer. Mg(2+) serves as cofactor.

It is found in the cytoplasm. The catalysed reaction is a 2'-deoxyribonucleoside 5'-diphosphate + ATP = a 2'-deoxyribonucleoside 5'-triphosphate + ADP. It carries out the reaction a ribonucleoside 5'-diphosphate + ATP = a ribonucleoside 5'-triphosphate + ADP. Functionally, major role in the synthesis of nucleoside triphosphates other than ATP. The ATP gamma phosphate is transferred to the NDP beta phosphate via a ping-pong mechanism, using a phosphorylated active-site intermediate. This Rhodopirellula baltica (strain DSM 10527 / NCIMB 13988 / SH1) protein is Nucleoside diphosphate kinase.